Reading from the N-terminus, the 486-residue chain is Glutamyl-tRNA(Gln) amidotransferase subunit A (486 aa).

Active-site charge relay system residues include Lys-78 and Ser-153. Ser-177 acts as the Acyl-ester intermediate in catalysis.

It belongs to the amidase family. GatA subfamily. In terms of assembly, heterotrimer of A, B and C subunits.

The enzyme catalyses L-glutamyl-tRNA(Gln) + L-glutamine + ATP + H2O = L-glutaminyl-tRNA(Gln) + L-glutamate + ADP + phosphate + H(+). Its function is as follows. Allows the formation of correctly charged Gln-tRNA(Gln) through the transamidation of misacylated Glu-tRNA(Gln) in organisms which lack glutaminyl-tRNA synthetase. The reaction takes place in the presence of glutamine and ATP through an activated gamma-phospho-Glu-tRNA(Gln). This Ruminiclostridium cellulolyticum (strain ATCC 35319 / DSM 5812 / JCM 6584 / H10) (Clostridium cellulolyticum) protein is Glutamyl-tRNA(Gln) amidotransferase subunit A.